The sequence spans 450 residues: Glucose-6-phosphate isomerase (450 aa).

The active-site Proton donor is the Glu-290. Catalysis depends on residues His-311 and Lys-425.

This sequence belongs to the GPI family.

Its subcellular location is the cytoplasm. The enzyme catalyses alpha-D-glucose 6-phosphate = beta-D-fructose 6-phosphate. It functions in the pathway carbohydrate biosynthesis; gluconeogenesis. The protein operates within carbohydrate degradation; glycolysis; D-glyceraldehyde 3-phosphate and glycerone phosphate from D-glucose: step 2/4. Its function is as follows. Catalyzes the reversible isomerization of glucose-6-phosphate to fructose-6-phosphate. The polypeptide is Glucose-6-phosphate isomerase (Alkaliphilus metalliredigens (strain QYMF)).